Consider the following 339-residue polypeptide: DNA-directed RNA polymerase subunit alpha (339 aa).

An alpha N-terminal domain (alpha-NTD) region spans residues 1–233 (MVREEITGST…DLFLPFIHTE (233 aa)). The segment at 266 to 339 (GIPLNCIFID…IDLPKNKFSL (74 aa)) is alpha C-terminal domain (alpha-CTD).

It belongs to the RNA polymerase alpha chain family. As to quaternary structure, in plastids the minimal PEP RNA polymerase catalytic core is composed of four subunits: alpha, beta, beta', and beta''. When a (nuclear-encoded) sigma factor is associated with the core the holoenzyme is formed, which can initiate transcription.

It localises to the plastid. Its subcellular location is the chloroplast. It carries out the reaction RNA(n) + a ribonucleoside 5'-triphosphate = RNA(n+1) + diphosphate. Its function is as follows. DNA-dependent RNA polymerase catalyzes the transcription of DNA into RNA using the four ribonucleoside triphosphates as substrates. This chain is DNA-directed RNA polymerase subunit alpha, found in Saccharum hybrid (Sugarcane).